A 97-amino-acid polypeptide reads, in one-letter code: Nucleoid-associated protein HPAG1_0033 (97 aa).

This sequence belongs to the YbaB/EbfC family. Homodimer.

The protein resides in the cytoplasm. Its subcellular location is the nucleoid. In terms of biological role, binds to DNA and alters its conformation. May be involved in regulation of gene expression, nucleoid organization and DNA protection. The chain is Nucleoid-associated protein HPAG1_0033 from Helicobacter pylori (strain HPAG1).